Reading from the N-terminus, the 328-residue chain is L-lactate dehydrogenase (328 aa).

NAD(+) is bound by residues Val-18, Glu-39, Lys-46, Tyr-71, and 85-86 (GA). Residues Gln-88 and Arg-94 each contribute to the substrate site. Residues Ser-107, 124–126 (AAN), and Ser-149 contribute to the NAD(+) site. Residue 126–129 (NPVD) coordinates substrate. A substrate-binding site is contributed by 154 to 157 (DTAR). Beta-D-fructose 1,6-bisphosphate contacts are provided by Arg-159 and His-174. His-181 serves as the catalytic Proton acceptor. Phosphotyrosine is present on Tyr-226. Thr-235 contacts substrate.

The protein belongs to the LDH/MDH superfamily. LDH family. As to quaternary structure, homotetramer.

It localises to the cytoplasm. It carries out the reaction (S)-lactate + NAD(+) = pyruvate + NADH + H(+). Its pathway is fermentation; pyruvate fermentation to lactate; (S)-lactate from pyruvate: step 1/1. Allosterically activated by fructose 1,6-bisphosphate (FBP). Its function is as follows. Catalyzes the conversion of lactate to pyruvate. The sequence is that of L-lactate dehydrogenase from Streptococcus mutans serotype c (strain ATCC 700610 / UA159).